The primary structure comprises 251 residues: Coenzyme F420:L-glutamate ligase (251 aa).

GTP contacts are provided by residues leucine 9–isoleucine 12, serine 38–threonine 39, and lysine 43. An a divalent metal cation-binding site is contributed by aspartate 113. A GTP-binding site is contributed by asparagine 116. Aspartate 149, threonine 150, and glutamate 207 together coordinate a divalent metal cation. Alanine 205–threonine 212 serves as a coordination point for GTP.

This sequence belongs to the CofE family. In terms of assembly, homodimer. Mg(2+) serves as cofactor. It depends on Mn(2+) as a cofactor. K(+) is required as a cofactor.

It catalyses the reaction oxidized coenzyme F420-0 + GTP + L-glutamate = oxidized coenzyme F420-1 + GDP + phosphate + H(+). The enzyme catalyses oxidized coenzyme F420-1 + GTP + L-glutamate = oxidized coenzyme F420-2 + GDP + phosphate + H(+). It functions in the pathway cofactor biosynthesis; coenzyme F420 biosynthesis. Functionally, catalyzes the GTP-dependent successive addition of two or more gamma-linked L-glutamates to the L-lactyl phosphodiester of 7,8-didemethyl-8-hydroxy-5-deazariboflavin (F420-0) to form coenzyme F420-0-glutamyl-glutamate (F420-2) or polyglutamated F420 derivatives. The protein is Coenzyme F420:L-glutamate ligase of Halorubrum lacusprofundi (strain ATCC 49239 / DSM 5036 / JCM 8891 / ACAM 34).